A 197-amino-acid polypeptide reads, in one-letter code: Imidazoleglycerol-phosphate dehydratase (197 aa).

It belongs to the imidazoleglycerol-phosphate dehydratase family.

It is found in the cytoplasm. The enzyme catalyses D-erythro-1-(imidazol-4-yl)glycerol 3-phosphate = 3-(imidazol-4-yl)-2-oxopropyl phosphate + H2O. Its pathway is amino-acid biosynthesis; L-histidine biosynthesis; L-histidine from 5-phospho-alpha-D-ribose 1-diphosphate: step 6/9. This is Imidazoleglycerol-phosphate dehydratase from Rhodopseudomonas palustris (strain BisB5).